Here is a 725-residue protein sequence, read N- to C-terminus: Nitrogen regulatory protein areA (725 aa).

3 disordered regions span residues 1–90 (MRLS…RTNS), 429–464 (NQGG…PRTA), and 479–524 (GSAS…PEPA). Residues 39 to 48 (PAEHSAHPSV) are compositionally biased toward basic and acidic residues. 2 stretches are compositionally biased toward polar residues: residues 442–452 (ASVSEVRNQNQ) and 479–500 (GSAS…SGLS). A GATA-type zinc finger spans residues 525-549 (CTNCFTQTTPLWRRNPEGQPLCNAC). The disordered stretch occupies residues 574–714 (RSSANTLTVG…NHSIAGGQGA (141 aa)). Composition is skewed to polar residues over residues 575-584 (SSANTLTVGT) and 597-624 (IQHA…SSTL). Low complexity-rich tracts occupy residues 631 to 656 (PIAA…QVAP) and 678 to 704 (KSAA…ANPA).

It is found in the nucleus. Major nitrogen regulatory protein. The sequence is that of Nitrogen regulatory protein areA (AREA) from Penicillium chrysogenum (Penicillium notatum).